Reading from the N-terminus, the 241-residue chain is MSSWVEVSLNTPAQLSLPLYLPDDETFASFWPGDNASLLAALQNVLRQEHSGYIYLWAREGAGRSHLLHAACAELSQRGDAVGYVPLDKRTWFVPEVLDGMEHLSLVCIDNIECVAGDELWEMAIFDLYNRILESGKTRLLITGDRPPRQLNLGLPDLASRLDWGQIYKLQPLSDEDKLQALQLRARLRGFELPEDVGRFLLKRLDREMRTLFMTLDQLDHASITAQRKLTIPFVKEILKL.

It belongs to the DnaA family. HdA subfamily. The active form seems to be an ADP-bound monomer. Forms the RIDA complex (regulatory inactivation of DnaA) of ATP-DnaA, ADP-Hda and the DNA-loaded beta sliding clamp (dnaN).

In terms of biological role, mediates the interaction of DNA replication initiator protein DnaA with DNA polymerase subunit beta sliding clamp (dnaN). Stimulates hydrolysis of ATP-DnaA to ADP-DnaA, rendering DnaA inactive for reinitiation, a process called regulatory inhibition of DnaA or RIDA. This is DnaA regulatory inactivator Hda from Salmonella agona (strain SL483).